The sequence spans 414 residues: Zinc metalloproteinase-disintegrin-like batroxstatin-3 (414 aa).

2 N-linked (GlcNAc...) asparagine glycosylation sites follow: N7 and N70. Positions 10-204 (KYIKLVIVAD…HTPQCILNEP (195 aa)) constitute a Peptidase M12B domain. Cystine bridges form between C121–C199, C161–C183, and C163–C168. H146 is a Zn(2+) binding site. E147 is an active-site residue. Residues H150 and H156 each coordinate Zn(2+). A Disintegrin domain is found at 212-298 (PEVCGNYLLE…HCPTDRFHRN (87 aa)). 5 residues coordinate Ca(2+): V214, N217, E221, E224, and D227. 14 disulfide bridges follow: C215–C244, C226–C239, C228–C234, C238–C261, C252–C258, C257–C283, C270–C290, C277–C309, C302–C314, C321–C371, C336–C381, C349–C359, C366–C403, and C397–C408. Positions 276–278 (ECD) match the D/ECD-tripeptide motif. D278, E281, D293, and R294 together coordinate Ca(2+).

Belongs to the venom metalloproteinase (M12B) family. P-III subfamily. P-IIIa sub-subfamily. Monomer. The cofactor is Zn(2+). As to expression, expressed by the venom gland.

The protein localises to the secreted. Functionally, snake venom zinc metalloprotease that induces apoptosis in vascular endothelial cells (VEC), without degrading the extracellular matrix (it cannot cleave collagen) or inhibiting adhesion of VEC. Has also fibrinogenolytic and hemorrhagic activities. This Bothrops atrox (Barba amarilla) protein is Zinc metalloproteinase-disintegrin-like batroxstatin-3.